Here is a 165-residue protein sequence, read N- to C-terminus: 2-C-methyl-D-erythritol 2,4-cyclodiphosphate synthase (165 aa).

A divalent metal cation-binding residues include Asp-11 and His-13. Residues 11–13 (DVH) and 40–41 (HS) contribute to the 4-CDP-2-C-methyl-D-erythritol 2-phosphate site. His-48 contributes to the a divalent metal cation binding site. Residues 62–64 (DIG), 67–71 (FPDTD), 137–140 (TTSE), Phe-144, and Arg-147 contribute to the 4-CDP-2-C-methyl-D-erythritol 2-phosphate site.

It belongs to the IspF family. Homotrimer. A divalent metal cation serves as cofactor.

The catalysed reaction is 4-CDP-2-C-methyl-D-erythritol 2-phosphate = 2-C-methyl-D-erythritol 2,4-cyclic diphosphate + CMP. Its pathway is isoprenoid biosynthesis; isopentenyl diphosphate biosynthesis via DXP pathway; isopentenyl diphosphate from 1-deoxy-D-xylulose 5-phosphate: step 4/6. Functionally, involved in the biosynthesis of isopentenyl diphosphate (IPP) and dimethylallyl diphosphate (DMAPP), two major building blocks of isoprenoid compounds. Catalyzes the conversion of 4-diphosphocytidyl-2-C-methyl-D-erythritol 2-phosphate (CDP-ME2P) to 2-C-methyl-D-erythritol 2,4-cyclodiphosphate (ME-CPP) with a corresponding release of cytidine 5-monophosphate (CMP). The chain is 2-C-methyl-D-erythritol 2,4-cyclodiphosphate synthase from Rubrobacter xylanophilus (strain DSM 9941 / JCM 11954 / NBRC 16129 / PRD-1).